The chain runs to 210 residues: Ribosomal RNA large subunit methyltransferase E (210 aa).

S-adenosyl-L-methionine is bound by residues glycine 55, tryptophan 57, aspartate 75, aspartate 93, and aspartate 117. The active-site Proton acceptor is lysine 157. A disordered region spans residues 175 to 210 (YRQVKTTKPPSSRKKSSEMYVVGLDFKPKKNKKSKD).

Belongs to the class I-like SAM-binding methyltransferase superfamily. RNA methyltransferase RlmE family.

The protein resides in the cytoplasm. The enzyme catalyses uridine(2552) in 23S rRNA + S-adenosyl-L-methionine = 2'-O-methyluridine(2552) in 23S rRNA + S-adenosyl-L-homocysteine + H(+). Specifically methylates the uridine in position 2552 of 23S rRNA at the 2'-O position of the ribose in the fully assembled 50S ribosomal subunit. The sequence is that of Ribosomal RNA large subunit methyltransferase E from Methanobrevibacter smithii (strain ATCC 35061 / DSM 861 / OCM 144 / PS).